The following is a 1023-amino-acid chain: Sodium/potassium-transporting ATPase subunit alpha-1 (1023 aa).

Residues 1-5 (MGLGK) constitute a propeptide that is removed on maturation. Residues 1-11 (MGLGKGKDEYK) show a composition bias toward basic and acidic residues. The tract at residues 1-33 (MGLGKGKDEYKLAATSEDGGKKDKKAKAKKDMD) is disordered. Topologically, residues 6–87 (GKDEYKLAAT…NALTPPPTTP (82 aa)) are cytoplasmic. Phosphoserine; by PKC is present on serine 16. Residues 82 to 84 (PPP) are interaction with phosphoinositide-3 kinase. Residues 88–108 (EWVKFCKQLFGGFSMLLWIGA) traverse the membrane as a helical segment. The Extracellular portion of the chain corresponds to 109–131 (ILCFLAYGIQAASEDEPANDNLY). The chain crosses the membrane as a helical span at residues 132 to 152 (LGIVLSAVVIITGCFSYYQEA). The Cytoplasmic portion of the chain corresponds to 153–288 (KSSKIMESFK…GGKTPIAIEI (136 aa)). The tract at residues 216-237 (SSLTGESEPQTRSPDFSNENPL) is disordered. A helical membrane pass occupies residues 289-308 (EHFIHIITGVAVFLGVSFFI). Residues 309 to 320 (LSLILGYNWLEA) are Extracellular-facing. Residues 321–338 (VIFLIGIIVANVPEGLLA) traverse the membrane as a helical segment. The Cytoplasmic segment spans residues 339 to 772 (TVTVCLTLTA…EEGRLIFDNL (434 aa)). Residue aspartate 376 is the 4-aspartylphosphate intermediate of the active site. An ATP-binding site is contributed by lysine 487. Residues aspartate 717 and aspartate 721 each contribute to the Mg(2+) site. The helical transmembrane segment at 773–792 (KKSIAYTLTSNIPEISPFLL) threads the bilayer. The Extracellular portion of the chain corresponds to 793–802 (FIIANIPLPL). A helical transmembrane segment spans residues 803 to 823 (GTVTILCIDLGTDMVPAISLA). Over 824 to 843 (YEKAESDIMKRQPRNPKTDK) the chain is Cytoplasmic. Residues 844–866 (LVNERLISIAYGQIGMMQATAGF) traverse the membrane as a helical segment. The Extracellular portion of the chain corresponds to 867–918 (FTYFVILAENGFLPMDLIGVRVLWDDKYVNDLEDSYGQQWTYERRKIVEYSC). A helical membrane pass occupies residues 919–938 (HTAFFASIVIVQWADLIICK). The Cytoplasmic segment spans residues 939–951 (TRRNSIVQQGMTN). Residue serine 943 is modified to Phosphoserine; by PKA. A helical transmembrane segment spans residues 952-970 (RILIFGLFEETALAAFLSY). Residues 971–985 (CPGMDVALRMYPMKP) are Extracellular-facing. Residues 986–1006 (LWWFCAFPYSLLIFLYDEARR) traverse the membrane as a helical segment. The Cytoplasmic portion of the chain corresponds to 1007 to 1023 (YILRRNPGGWVEKETYY).

It belongs to the cation transport ATPase (P-type) (TC 3.A.3) family. Type IIC subfamily. The sodium/potassium-transporting ATPase is composed of a catalytic alpha subunit, an auxiliary non-catalytic beta subunit and an additional regulatory subunit.

The protein resides in the cell membrane. The protein localises to the sarcolemma. It catalyses the reaction K(+)(out) + Na(+)(in) + ATP + H2O = K(+)(in) + Na(+)(out) + ADP + phosphate + H(+). This is the catalytic component of the active enzyme, which catalyzes the hydrolysis of ATP coupled with the exchange of sodium and potassium ions across the plasma membrane. This action creates the electrochemical gradient of sodium and potassium ions, providing the energy for active transport of various nutrients. In Oreochromis mossambicus (Mozambique tilapia), this protein is Sodium/potassium-transporting ATPase subunit alpha-1 (atp1a1).